The chain runs to 216 residues: MRVAIIDYGSGNLRSATKAFERAAREGGISAEIDLTADADRVRTADRIVLPGVGAYADCAAGLRAVDGMWEAVEDVAIAQSRPFLGICVGMQLMSERGLEKTVTHGFGWISGDVKEITPTDPALKIPQIGWNTIELRRQHPLFAGIPTGPEGLHAYFVHSYHLDAKKPDEILAVADYGGPVTAAVARDNLVGTQFHPEKSQALGLALITNFLRWRP.

Positions 2-216 constitute a Glutamine amidotransferase type-1 domain; sequence RVAIIDYGSG…LITNFLRWRP (215 aa). Cys88 serves as the catalytic Nucleophile. Residues His196 and Glu198 contribute to the active site.

Heterodimer of HisH and HisF.

The protein localises to the cytoplasm. The enzyme catalyses 5-[(5-phospho-1-deoxy-D-ribulos-1-ylimino)methylamino]-1-(5-phospho-beta-D-ribosyl)imidazole-4-carboxamide + L-glutamine = D-erythro-1-(imidazol-4-yl)glycerol 3-phosphate + 5-amino-1-(5-phospho-beta-D-ribosyl)imidazole-4-carboxamide + L-glutamate + H(+). The catalysed reaction is L-glutamine + H2O = L-glutamate + NH4(+). Its pathway is amino-acid biosynthesis; L-histidine biosynthesis; L-histidine from 5-phospho-alpha-D-ribose 1-diphosphate: step 5/9. Functionally, IGPS catalyzes the conversion of PRFAR and glutamine to IGP, AICAR and glutamate. The HisH subunit catalyzes the hydrolysis of glutamine to glutamate and ammonia as part of the synthesis of IGP and AICAR. The resulting ammonia molecule is channeled to the active site of HisF. This is Imidazole glycerol phosphate synthase subunit HisH from Mesorhizobium japonicum (strain LMG 29417 / CECT 9101 / MAFF 303099) (Mesorhizobium loti (strain MAFF 303099)).